Consider the following 611-residue polypeptide: Actin-related protein 5 (611 aa).

2 coiled-coil regions span residues 290-329 (TLTSEEKQERRQQQLRRLQELNARRREEKLQLDQERLDRL) and 355-386 (SAEELQSYINKLSLAIEQTKQKILQAEVNIEV).

The protein belongs to the actin family. ARP5 subfamily. In terms of assembly, component of the chromatin remodeling INO80 complex.

The protein resides in the nucleus. Its function is as follows. Proposed core component of the chromatin remodeling INO80 complex which is involved in transcriptional regulation, DNA replication and probably DNA repair. The protein is Actin-related protein 5 (ACTR5) of Gallus gallus (Chicken).